The primary structure comprises 423 residues: MNILQNLKESDPVISNFINSEKNRQETHLELIASENFASIAVMQAQGSVLTNKYAEGLPQKRYYGGCEFVDEIEELAIQRAKKLFNANWANVQPHSGAQANAAVFLSLLKPGDTIMGMDLSHGGHLTHGSPVNMSGKWFNAVHYGVNKETSELNFDEIREIALEKKPKLIICGYSAYPRTIDFESFRNIADEVGAFLMADIAHIAGLVASKLHPNPIPHCDVVTTTTHKTLRGPRGGLILCKDAEFGKKFDKSVFPGTQGGPLEHIIAAKAVAFREALQPDFVNYSQQVIKNAKVLASTLINRGINIVSGGTDNHIVLLDLRSINMTGKIADLLVSEVNITANKNTVPFDPESPFVTSGLRLGTAALTTRGFNENAFAEVGEIIADRLLNPDNSLIESQCKERVLTLCNRFPLYEGKLEASIK.

(6S)-5,6,7,8-tetrahydrofolate is bound by residues L120 and 124 to 126; that span reads GHL. An N6-(pyridoxal phosphate)lysine modification is found at K229. Residue 353–355 coordinates (6S)-5,6,7,8-tetrahydrofolate; that stretch reads SPF.

It belongs to the SHMT family. In terms of assembly, homodimer. Pyridoxal 5'-phosphate is required as a cofactor.

It is found in the cytoplasm. It catalyses the reaction (6R)-5,10-methylene-5,6,7,8-tetrahydrofolate + glycine + H2O = (6S)-5,6,7,8-tetrahydrofolate + L-serine. The protein operates within one-carbon metabolism; tetrahydrofolate interconversion. It participates in amino-acid biosynthesis; glycine biosynthesis; glycine from L-serine: step 1/1. Its function is as follows. Catalyzes the reversible interconversion of serine and glycine with tetrahydrofolate (THF) serving as the one-carbon carrier. This reaction serves as the major source of one-carbon groups required for the biosynthesis of purines, thymidylate, methionine, and other important biomolecules. Also exhibits THF-independent aldolase activity toward beta-hydroxyamino acids, producing glycine and aldehydes, via a retro-aldol mechanism. The polypeptide is Serine hydroxymethyltransferase (Prochlorococcus marinus (strain AS9601)).